A 156-amino-acid polypeptide reads, in one-letter code: ATP synthase subunit b (156 aa).

The chain crosses the membrane as a helical span at residues 11–31 (AIAFILFVAFCMKYVWPPLMA).

Belongs to the ATPase B chain family. F-type ATPases have 2 components, F(1) - the catalytic core - and F(0) - the membrane proton channel. F(1) has five subunits: alpha(3), beta(3), gamma(1), delta(1), epsilon(1). F(0) has three main subunits: a(1), b(2) and c(10-14). The alpha and beta chains form an alternating ring which encloses part of the gamma chain. F(1) is attached to F(0) by a central stalk formed by the gamma and epsilon chains, while a peripheral stalk is formed by the delta and b chains.

The protein localises to the cell inner membrane. Functionally, f(1)F(0) ATP synthase produces ATP from ADP in the presence of a proton or sodium gradient. F-type ATPases consist of two structural domains, F(1) containing the extramembraneous catalytic core and F(0) containing the membrane proton channel, linked together by a central stalk and a peripheral stalk. During catalysis, ATP synthesis in the catalytic domain of F(1) is coupled via a rotary mechanism of the central stalk subunits to proton translocation. Component of the F(0) channel, it forms part of the peripheral stalk, linking F(1) to F(0). This is ATP synthase subunit b from Erwinia tasmaniensis (strain DSM 17950 / CFBP 7177 / CIP 109463 / NCPPB 4357 / Et1/99).